The primary structure comprises 366 residues: Histidinol-phosphate aminotransferase 2 (366 aa).

A disordered region spans residues 1–21 (MQVKDQLSLLQPYKPGKSPEQ). Position 222 is an N6-(pyridoxal phosphate)lysine (Lys-222).

It belongs to the class-II pyridoxal-phosphate-dependent aminotransferase family. Histidinol-phosphate aminotransferase subfamily. In terms of assembly, homodimer. It depends on pyridoxal 5'-phosphate as a cofactor.

The enzyme catalyses L-histidinol phosphate + 2-oxoglutarate = 3-(imidazol-4-yl)-2-oxopropyl phosphate + L-glutamate. It functions in the pathway amino-acid biosynthesis; L-histidine biosynthesis; L-histidine from 5-phospho-alpha-D-ribose 1-diphosphate: step 7/9. The protein is Histidinol-phosphate aminotransferase 2 of Bacillus cereus (strain ZK / E33L).